The primary structure comprises 352 residues: PDZ and LIM domain protein 2 (352 aa).

Residues 1–84 (MALTVDVAGP…PLRLQLDRSQ (84 aa)) form the PDZ domain. Disordered stretches follow at residues 69–95 (IRQS…NGDS) and 108–141 (VRTH…PPPF). Positions 81-95 (DRSQAASPGQTNGDS) are enriched in polar residues. Residues 117–135 (SLRSSYSSPTSLSPRAGSP) show a composition bias toward low complexity. Ser124 bears the Phosphoserine mark. Thr126 carries the phosphothreonine modification. A phosphoserine mark is found at Ser127, Ser129, Ser134, Ser137, Ser143, Ser161, Ser197, Ser203, Ser213, and Ser266. Disordered regions lie at residues 170 to 214 (LSYS…GGSL) and 253 to 275 (ERGG…PASR). Low complexity predominate over residues 258–275 (PAFLPSSLSPQSSLPASR). In terms of domain architecture, LIM zinc-binding spans 284 to 344 (HTCEKCSTSI…EKHARQRYSA (61 aa)).

In terms of assembly, interacts with alpha-actinins ACTN1 and ACTN4, FLNA and MYH9. Interacts (via LIM zinc-binding domain) with MKRN2.

The protein resides in the cytoplasm. It localises to the cytoskeleton. Probable adapter protein located at the actin cytoskeleton that promotes cell attachment. Necessary for the migratory capacity of epithelial cells. Overexpression enhances cell adhesion to collagen and fibronectin and suppresses anchorage independent growth. May contribute to tumor cell migratory capacity. The sequence is that of PDZ and LIM domain protein 2 (PDLIM2) from Macaca fascicularis (Crab-eating macaque).